The sequence spans 329 residues: tRNA uridine(34) hydroxylase (329 aa).

The region spanning 123-217 (SDPETVLIDT…YLEEVPKEKS (95 aa)) is the Rhodanese domain. The active-site Cysteine persulfide intermediate is cysteine 177. The disordered stretch occupies residues 310–329 (LNKQKKQQAKEAARKKTEKN). Over residues 317-329 (QAKEAARKKTEKN) the composition is skewed to basic and acidic residues.

This sequence belongs to the TrhO family.

It carries out the reaction uridine(34) in tRNA + AH2 + O2 = 5-hydroxyuridine(34) in tRNA + A + H2O. Functionally, catalyzes oxygen-dependent 5-hydroxyuridine (ho5U) modification at position 34 in tRNAs. This Francisella tularensis subsp. novicida (strain U112) protein is tRNA uridine(34) hydroxylase.